The chain runs to 631 residues: ATP-dependent RNA helicase mrh4, mitochondrial (631 aa).

The N-terminal 45 residues, 1-45, are a transit peptide targeting the mitochondrion; the sequence is MNRLGRLPLPLPPSVCLFCRFRATASLPSSLQATRSMATARLRRR. Residues 68-112 form a disordered region; that stretch reads KERFGPFAGMNQTEARIRETPRARSRAAQKRSGEPEEDSQKESPL. Over residues 98–108 the composition is skewed to basic and acidic residues; it reads RSGEPEEDSQK. Residues 141-174 carry the Q motif motif; that stretch reads TSFDQFQLLPVVRNSISSQALPGLVDVTPTPIQR. Over residues 180–193 the composition is skewed to basic and acidic residues; it reads LLEEPKTEKKPTKA. The segment at 180–199 is disordered; the sequence is LLEEPKTEKKPTKADDDEPR. In terms of domain architecture, Helicase ATP-binding spans 194–406; the sequence is DDDEPRYDQY…RKRYPDIKRL (213 aa). 207-214 lines the ATP pocket; that stretch reads AETGSGKT. The interval 229–249 is disordered; the sequence is EARDKELEKKEQEEKAREREE. Residues 353–356 carry the DEAD box motif; sequence DEAD. Positions 455-631 constitute a Helicase C-terminal domain; sequence GPYASYVAPK…EGMFRGQALI (177 aa).

It belongs to the DEAD box helicase family. MRH4 subfamily.

It localises to the mitochondrion. The catalysed reaction is ATP + H2O = ADP + phosphate + H(+). ATP-binding RNA helicase involved in mitochondrial RNA metabolism. Required for maintenance of mitochondrial DNA. This is ATP-dependent RNA helicase mrh4, mitochondrial (mrh4) from Aspergillus fumigatus (strain ATCC MYA-4609 / CBS 101355 / FGSC A1100 / Af293) (Neosartorya fumigata).